A 271-amino-acid polypeptide reads, in one-letter code: MSKRLLLFDFDETYFKHNTNEEDLSHLREMEKLLEKLTNNNEVITAVLTGSTFQSVMDKMDQVNMTFKPLHIFSDLSSKMFTWNNGEYVESETYKKKVLSEPFLFEDIEDILRHISAQYNVEFIPQRAFEGNETHYNFYFHSTGNHNNDSRILEALVRYANDQNYTARFSRSNPLAGDPENAYDIDFTPSNAGKLYATQFLMRKYNIPVKSILGFGDSGNDEAYLSYLEHAYLMSNSRDEALKQKFRLTKYPYYQGITLHVKEFVEGKYDY.

Belongs to the HAD-like hydrolase superfamily.

This is an uncharacterized protein from Staphylococcus aureus (strain NCTC 8325 / PS 47).